A 360-amino-acid chain; its full sequence is Probable ribonucleoside-diphosphate reductase small subunit 376L (360 aa).

Positions 67, 98, and 101 each coordinate Fe cation. Y105 is an active-site residue. Fe cation-binding residues include E172, E206, and H209.

The protein belongs to the ribonucleoside diphosphate reductase small chain family. In terms of assembly, heterotetramer composed of a homodimer of the large subunit (R1) and a homodimer of the small subunit (R2). Larger multisubunit protein complex are also active, composed of (R1)n(R2)n. Fe cation is required as a cofactor.

It carries out the reaction a 2'-deoxyribonucleoside 5'-diphosphate + [thioredoxin]-disulfide + H2O = a ribonucleoside 5'-diphosphate + [thioredoxin]-dithiol. Functionally, ribonucleoside-diphosphate reductase holoenzyme provides the precursors necessary for viral DNA synthesis. Allows virus growth in non-dividing cells. Catalyzes the biosynthesis of deoxyribonucleotides from the corresponding ribonucleotides. In Acheta domesticus (House cricket), this protein is Probable ribonucleoside-diphosphate reductase small subunit 376L.